The sequence spans 224 residues: Large ribosomal subunit protein uL3 (224 aa).

Residues 132-153 (SQTKTHGTHEYQRHPGAIGQRK) are disordered.

The protein belongs to the universal ribosomal protein uL3 family. Part of the 50S ribosomal subunit. Forms a cluster with proteins L14 and L19.

Functionally, one of the primary rRNA binding proteins, it binds directly near the 3'-end of the 23S rRNA, where it nucleates assembly of the 50S subunit. In Myxococcus xanthus (strain DK1622), this protein is Large ribosomal subunit protein uL3.